Consider the following 1134-residue polypeptide: Spermatogenesis-associated protein 31C2 (1134 aa).

A helical transmembrane segment spans residues 23–43; sequence PWVLDIFLTLVFALGFFFLLL. Disordered regions lie at residues 54–87, 115–243, 477–504, 524–561, 727–807, 928–1007, and 1111–1134; these read PPSP…NHSL, LEKG…LLTP, PGTS…EAQT, TPQN…DSGS, MPER…PTVP, NMGH…PSIS, and AASS…IRDQ. A compositionally biased stretch (basic residues) spans 59-87; the sequence is PKKRKRHLVSQRPAGRRGRPRGRMKNHSL. Residues 132–148 are compositionally biased toward basic and acidic residues; that stretch reads VGKRTPDGASRSSHEPT. Residues 185-201 are compositionally biased toward low complexity; sequence SSLSASQPPEPSLLLEH. Positions 204 to 235 are enriched in pro residues; sequence PEPPALFPHPPRTPDPLACSPPPPKGFTPPPL. The segment covering 489 to 504 has biased composition (polar residues); sequence WQSSTSTGESSKEAQT. 2 stretches are compositionally biased toward polar residues: residues 773-794 and 937-948; these read LTYS…SSRA and PNCQGSCKSQSP. Residues 954 to 970 are compositionally biased toward basic and acidic residues; sequence HKRENSRKPNLEKHEEM. Over residues 1111–1124 the composition is skewed to polar residues; the sequence is AASSQQATLKNQSR. The segment covering 1125 to 1134 has biased composition (basic and acidic residues); the sequence is PNRDRQIRDQ.

Belongs to the SPATA31 family.

The protein resides in the membrane. May play a role in spermatogenesis. The sequence is that of Spermatogenesis-associated protein 31C2 (SPATA31C2) from Homo sapiens (Human).